The chain runs to 432 residues: Glutamate-1-semialdehyde 2,1-aminomutase 1 (432 aa).

N6-(pyridoxal phosphate)lysine is present on K272.

Belongs to the class-III pyridoxal-phosphate-dependent aminotransferase family. HemL subfamily. Homodimer. Requires pyridoxal 5'-phosphate as cofactor.

It localises to the cytoplasm. The enzyme catalyses (S)-4-amino-5-oxopentanoate = 5-aminolevulinate. The protein operates within porphyrin-containing compound metabolism; protoporphyrin-IX biosynthesis; 5-aminolevulinate from L-glutamyl-tRNA(Glu): step 2/2. The sequence is that of Glutamate-1-semialdehyde 2,1-aminomutase 1 from Exiguobacterium sp. (strain ATCC BAA-1283 / AT1b).